The sequence spans 209 residues: Imidazole glycerol phosphate synthase subunit HisH (209 aa).

A Glutamine amidotransferase type-1 domain is found at 3–209; the sequence is KIGLIDYGMG…WINWLKKNKF (207 aa). Cysteine 81 (nucleophile) is an active-site residue. Residues histidine 185 and glutamate 187 contribute to the active site.

Heterodimer of HisH and HisF.

The protein resides in the cytoplasm. It catalyses the reaction 5-[(5-phospho-1-deoxy-D-ribulos-1-ylimino)methylamino]-1-(5-phospho-beta-D-ribosyl)imidazole-4-carboxamide + L-glutamine = D-erythro-1-(imidazol-4-yl)glycerol 3-phosphate + 5-amino-1-(5-phospho-beta-D-ribosyl)imidazole-4-carboxamide + L-glutamate + H(+). It carries out the reaction L-glutamine + H2O = L-glutamate + NH4(+). It participates in amino-acid biosynthesis; L-histidine biosynthesis; L-histidine from 5-phospho-alpha-D-ribose 1-diphosphate: step 5/9. Its function is as follows. IGPS catalyzes the conversion of PRFAR and glutamine to IGP, AICAR and glutamate. The HisH subunit catalyzes the hydrolysis of glutamine to glutamate and ammonia as part of the synthesis of IGP and AICAR. The resulting ammonia molecule is channeled to the active site of HisF. This Prochlorococcus marinus (strain NATL2A) protein is Imidazole glycerol phosphate synthase subunit HisH.